Reading from the N-terminus, the 699-residue chain is Elongation factor G (699 aa).

The tr-type G domain maps to 8 to 290 (ERYRNIGIMA…AVLDYLPSPV (283 aa)). Residues 17-24 (AHIDAGKT), 88-92 (DTPGH), and 142-145 (NKMD) contribute to the GTP site.

It belongs to the TRAFAC class translation factor GTPase superfamily. Classic translation factor GTPase family. EF-G/EF-2 subfamily.

Its subcellular location is the cytoplasm. Catalyzes the GTP-dependent ribosomal translocation step during translation elongation. During this step, the ribosome changes from the pre-translocational (PRE) to the post-translocational (POST) state as the newly formed A-site-bound peptidyl-tRNA and P-site-bound deacylated tRNA move to the P and E sites, respectively. Catalyzes the coordinated movement of the two tRNA molecules, the mRNA and conformational changes in the ribosome. This chain is Elongation factor G, found in Acidithiobacillus ferrooxidans (strain ATCC 23270 / DSM 14882 / CIP 104768 / NCIMB 8455) (Ferrobacillus ferrooxidans (strain ATCC 23270)).